Here is a 212-residue protein sequence, read N- to C-terminus: Translation initiation factor IF-3 (212 aa).

A disordered region spans residues 168-212 (MAPKAPASPKKDKADRPEGDAGDTDMAAPAPAPAAAPETESAPSA). A compositionally biased stretch (basic and acidic residues) spans 176–186 (PKKDKADRPEG). A compositionally biased stretch (low complexity) spans 194 to 212 (AAPAPAPAAAPETESAPSA).

Belongs to the IF-3 family. In terms of assembly, monomer.

It is found in the cytoplasm. IF-3 binds to the 30S ribosomal subunit and shifts the equilibrium between 70S ribosomes and their 50S and 30S subunits in favor of the free subunits, thus enhancing the availability of 30S subunits on which protein synthesis initiation begins. The polypeptide is Translation initiation factor IF-3 (Deinococcus radiodurans (strain ATCC 13939 / DSM 20539 / JCM 16871 / CCUG 27074 / LMG 4051 / NBRC 15346 / NCIMB 9279 / VKM B-1422 / R1)).